A 326-amino-acid polypeptide reads, in one-letter code: Aspartate--ammonia ligase (326 aa).

Belongs to the class-II aminoacyl-tRNA synthetase family. AsnA subfamily.

It localises to the cytoplasm. It carries out the reaction L-aspartate + NH4(+) + ATP = L-asparagine + AMP + diphosphate + H(+). It participates in amino-acid biosynthesis; L-asparagine biosynthesis; L-asparagine from L-aspartate (ammonia route): step 1/1. The chain is Aspartate--ammonia ligase from Malacoplasma penetrans (strain HF-2) (Mycoplasma penetrans).